Consider the following 740-residue polypeptide: Alpha-1,6-mannosylglycoprotein 6-beta-N-acetylglucosaminyltransferase A (740 aa).

The Cytoplasmic segment spans residues 1 to 13 (MAFFSPWKLSSQK). The helical; Signal-anchor for type II membrane protein transmembrane segment at 14–30 (LGFFLVTFGFIWGMMLL) threads the bilayer. The Lumenal portion of the chain corresponds to 31–740 (HFTIQQRTQP…GQVALCKDCL (710 aa)). Residues N109, N114, and N117 are each glycosylated (N-linked (GlcNAc...) asparagine). 9 disulfide bridges follow: C144/C182, C155/C195, C171/C337, C371/C625, C648/C723, C652/C725, C659/C712, C680/C701, and C736/C739. The interval 212 to 740 (NSLAEIRTDF…GQVALCKDCL (529 aa)) is sufficient for catalytic activity. N-linked (GlcNAc...) asparagine glycosylation is present at N333. 377–378 (DS) provides a ligand contact to substrate. N432 and N446 each carry an N-linked (GlcNAc...) asparagine glycan. UDP-N-acetyl-alpha-D-glucosamine is bound at residue E525. Position 553 (K553) interacts with substrate.

The protein belongs to the glycosyltransferase 18 family. Post-translationally, N-glycosylated. In terms of processing, a secreted form is released from the membrane after cleavage by gamma-secretase. As to expression, detected in cerebellum.

The protein resides in the golgi apparatus membrane. The protein localises to the perikaryon. It is found in the secreted. It catalyses the reaction N(4)-{beta-D-GlcNAc-(1-&gt;2)-[beta-D-GlcNAc-(1-&gt;4)]-alpha-D-Man-(1-&gt;3)-[beta-D-GlcNAc-(1-&gt;2)-alpha-D-Man-(1-&gt;6)]-beta-D-Man-(1-&gt;4)-beta-D-GlcNAc-(1-&gt;4)-beta-D-GlcNAc}-L-asparaginyl-[protein] + UDP-N-acetyl-alpha-D-glucosamine = N(4)-{beta-D-GlcNAc-(1-&gt;2)-[beta-D-GlcNAc-(1-&gt;4)]-alpha-D-Man-(1-&gt;3)-[beta-D-GlcNAc-(1-&gt;2)-[beta-D-GlcNAc-(1-&gt;6)]-alpha-D-Man-(1-&gt;6)]-beta-D-Man-(1-&gt;4)-beta-D-GlcNAc-(1-&gt;4)-beta-D-GlcNAc}-L-asparaginyl-[protein] + UDP + H(+). Its pathway is protein modification; protein glycosylation. In terms of biological role, catalyzes the addition of N-acetylglucosamine (GlcNAc) in beta 1-6 linkage to the alpha-linked mannose of biantennary N-linked oligosaccharides. Catalyzes an important step in the biosynthesis of branched, complex-type N-glycans, such as those found on EGFR, TGFR (TGF-beta receptor) and CDH2. Via its role in the biosynthesis of complex N-glycans, plays an important role in the activation of cellular signaling pathways, reorganization of the actin cytoskeleton, cell-cell adhesion and cell migration. MGAT5-dependent EGFR N-glycosylation enhances the interaction between EGFR and LGALS3 and thereby prevents rapid EGFR endocytosis and prolongs EGFR signaling. Required for efficient interaction between TGFB1 and its receptor. Enhances activation of intracellular signaling pathways by several types of growth factors, including FGF2, PDGF, IGF, TGFB1 and EGF. MGAT5-dependent CDH2 N-glycosylation inhibits CDH2-mediated homotypic cell-cell adhesion and contributes to the regulation of downstream signaling pathways. Promotes cell migration. Contributes to the regulation of the inflammatory response. MGAT5-dependent TCR N-glycosylation enhances the interaction between TCR and LGALS3, limits agonist-induced TCR clustering, and thereby dampens TCR-mediated responses to antigens. Required for normal leukocyte evasation and accumulation at sites of inflammation. Inhibits attachment of monocytes to the vascular endothelium and subsequent monocyte diapedesis. Functionally, promotes proliferation of umbilical vein endothelial cells and angiogenesis, at least in part by promoting the release of the growth factor FGF2 from the extracellular matrix. This Mus musculus (Mouse) protein is Alpha-1,6-mannosylglycoprotein 6-beta-N-acetylglucosaminyltransferase A (Mgat5).